The sequence spans 514 residues: Calcium-binding mitochondrial carrier protein SCaMC-2 (514 aa).

The Mitochondrial intermembrane portion of the chain corresponds to M1 to H234. EF-hand domains lie at E56–H91, R92–R122, D123–N158, and I159–E194. 9 residues coordinate Ca(2+): D69, N71, D73, D80, D105, D107, D109, Q111, and E116. 3 Solcar repeats span residues G229–I315, L323–A408, and P420–T508. The helical transmembrane segment at L235 to L252 threads the bilayer. The Mitochondrial matrix segment spans residues D253 to R289. The helical transmembrane segment at G290–Y309 threads the bilayer. Residues E310–G332 are Mitochondrial intermembrane-facing. A helical membrane pass occupies residues S333–M346. Over E347 to K382 the chain is Mitochondrial matrix. A helical membrane pass occupies residues G383–Y402. Residues E403–L425 are Mitochondrial intermembrane-facing. A helical transmembrane segment spans residues L426–L443. At A444–R482 the chain is on the mitochondrial matrix side. A helical membrane pass occupies residues G483–Y502. Topologically, residues E503–R514 are mitochondrial intermembrane.

It belongs to the mitochondrial carrier (TC 2.A.29) family.

It localises to the mitochondrion inner membrane. Calcium-dependent mitochondrial solute carrier. The sequence is that of Calcium-binding mitochondrial carrier protein SCaMC-2 (slc25a25) from Xenopus laevis (African clawed frog).